Consider the following 151-residue polypeptide: MFGVAKRFWIPMVIVIVVAVAAVTVSRLHSVFGSHQHAPDTGNLDPIIAFYPKHVLYEVFGPPGTVASINYLDADAQPHEVVNAAVPWSFTIVTTLTAVVANVVARGDGASLGCRITVNEVNRPGMSGDSSSWKGWGHVRWFIEEVPAGAA.

The next 2 membrane-spanning stretches (helical) occupy residues 8-28 (FWIPMVIVIVVAVAAVTVSRL) and 81-101 (VVNAAVPWSFTIVTTLTAVVA).

It belongs to the MmpS family.

It localises to the cell membrane. The sequence is that of Probable transport accessory protein MmpS1 (mmpS1) from Mycobacterium tuberculosis (strain CDC 1551 / Oshkosh).